Reading from the N-terminus, the 347-residue chain is NADH-ubiquinone oxidoreductase chain 2 (347 aa).

10 helical membrane-spanning segments follow: residues 1–21 (MNPL…AIVA), 25–45 (HWLM…PILM), 59–79 (YFLT…MNLV), 111–131 (FHFW…LILL), 149–169 (INLD…GWGG), 178–198 (IMAY…AYNP), 201–221 (TLLN…MFML), 237–257 (MPLL…LPPL), 276–296 (VILP…YMRL), and 326–346 (LSPL…LALL).

Belongs to the complex I subunit 2 family. As to quaternary structure, core subunit of respiratory chain NADH dehydrogenase (Complex I) which is composed of 45 different subunits. Interacts with TMEM242.

It is found in the mitochondrion inner membrane. The catalysed reaction is a ubiquinone + NADH + 5 H(+)(in) = a ubiquinol + NAD(+) + 4 H(+)(out). Its function is as follows. Core subunit of the mitochondrial membrane respiratory chain NADH dehydrogenase (Complex I) which catalyzes electron transfer from NADH through the respiratory chain, using ubiquinone as an electron acceptor. Essential for the catalytic activity and assembly of complex I. This Pteropus pumilus (Little golden-mantled flying fox) protein is NADH-ubiquinone oxidoreductase chain 2.